We begin with the raw amino-acid sequence, 165 residues long: Endoribonuclease YbeY (165 aa).

The Zn(2+) site is built by H119, H123, and H129.

The protein belongs to the endoribonuclease YbeY family. Zn(2+) serves as cofactor.

The protein resides in the cytoplasm. In terms of biological role, single strand-specific metallo-endoribonuclease involved in late-stage 70S ribosome quality control and in maturation of the 3' terminus of the 16S rRNA. The polypeptide is Endoribonuclease YbeY (Streptomyces coelicolor (strain ATCC BAA-471 / A3(2) / M145)).